Here is a 732-residue protein sequence, read N- to C-terminus: Translation initiation factor IF-2 (732 aa).

The interval 40–147 (PEVVEKLDHT…QQEQPMKKEK (108 aa)) is disordered. Over residues 42 to 67 (VVEKLDHTYNKKNERPQASAPKEKQK) the composition is skewed to basic and acidic residues. Basic residues predominate over residues 90-103 (KVPKKKSANKKKEG). The segment covering 104–117 (KKHDLQLQQQEKKI) has biased composition (basic and acidic residues). Residues 118 to 129 (FHQQKKKIKGKA) are compositionally biased toward basic residues. The 170-residue stretch at 233–402 (ERPPVVTIMG…LLVSEMEELK (170 aa)) folds into the tr-type G domain. A G1 region spans residues 242-249 (GHVDHGKT). GTP is bound at residue 242 to 249 (GHVDHGKT). Residues 267–271 (GITQH) form a G2 region. A G3 region spans residues 288-291 (DTPG). Residues 288–292 (DTPGH) and 342–345 (NKMD) each bind GTP. The interval 342 to 345 (NKMD) is G4. The G5 stretch occupies residues 378–380 (SAK).

Belongs to the TRAFAC class translation factor GTPase superfamily. Classic translation factor GTPase family. IF-2 subfamily.

It is found in the cytoplasm. Functionally, one of the essential components for the initiation of protein synthesis. Protects formylmethionyl-tRNA from spontaneous hydrolysis and promotes its binding to the 30S ribosomal subunits. Also involved in the hydrolysis of GTP during the formation of the 70S ribosomal complex. The chain is Translation initiation factor IF-2 from Geobacillus sp. (strain WCH70).